The chain runs to 145 residues: Neuropeptide-like protein 68 (145 aa).

Positions 1 to 15 (MLLVLLFSLFSVGFG) are cleaved as a signal peptide. The disordered stretch occupies residues 41-65 (SSSSEDDTPDFPSLRDKRGVDPMSI).

It localises to the secreted. The protein is Neuropeptide-like protein 68 of Caenorhabditis elegans.